The sequence spans 1794 residues: Protein TIC 214 (1794 aa).

The next 6 membrane-spanning stretches (helical) occupy residues 23 to 43, 64 to 84, 87 to 107, 124 to 144, 172 to 192, and 218 to 238; these read VVVGLYYGFITTFSIGPSYLF, FIMGQFMMLISIYYTPLHLAL, PHTITVLVLPYLLFHFFWNNH, LSIQCVFLNNLIFQLFNHFIL, VGWLIGHILFMKWVGLVLFWI, and ILSILLFITCVYYLGRIPSPI. Residues 244–307 are disordered; sequence KETSETGETE…REGVNGKEKT (64 aa). Residues 248–258 show a composition bias toward acidic residues; it reads ETGETEEETDV. 2 stretches are compositionally biased toward basic and acidic residues: residues 259 to 276 and 286 to 307; these read EIERTSETKGTEQEKEGS and SEEKGDPDKIDEREGVNGKEKT.

The protein belongs to the TIC214 family. Part of the Tic complex.

The protein localises to the plastid. It localises to the chloroplast inner membrane. Its function is as follows. Involved in protein precursor import into chloroplasts. May be part of an intermediate translocation complex acting as a protein-conducting channel at the inner envelope. The protein is Protein TIC 214 of Amborella trichopoda.